Consider the following 590-residue polypeptide: MIPSDFIDELLAKTDIVDIIDEQVPLKKGGANYMACCPFHKEKTPSFSVSPTKQFYHCFSCGAHGSAIGFVMEHQGLSFPEAVQFLADRVGMVVPKVHGQNDNPEVRAERKKKQQTLEETTAAAADFYAQQLKFNPAAKAYLDKRGLSAEVIAHYGLGYAPDGWQPLTQVFQPYPNTALVDTGMVIDNEGRHYDRFRHRIMFPIRNPRGQVIGFGGRVLDDSKPKYLNSPDTPLFDKGKNLYGLYEGRAAVKEAGRILVVEGYMDVVALAQFGVGYGVAALGTATTAEHVKILMRQADSIYFCFDGDSAGRKAAWRALENALPQLKDDKSLHFLFLPEEHDPDSYIRAYGKAQFEDALLNQSKPLSEYFWEHLSDGIHLNTQEGKAELVKTSSPLLAQITAPALAYLLKQRLSELVGIDPDNLAQLLGQEAPKRHVKQKNYKLPPISVKQPVMLTLVQRQIRSLLINPDWAAYIDLPDYLALDGDFACLANLAESIKNHAAVPETAQVLEYMRGSPYEETITRIFHSTHQSEEMNSSSEEDCENFQIGMKKLLNELKYSQIETLKQKSLQSGLNESEKKLLLSLLTAKQN.

Residues 37 to 61 (CPFHKEKTPSFSVSPTKQFYHCFSC) form a CHC2-type zinc finger. A Toprim domain is found at 255–337 (GRILVVEGYM…DKSLHFLFLP (83 aa)). Mg(2+)-binding residues include E261, D305, and D307.

It belongs to the DnaG primase family. Monomer. Interacts with DnaB. The cofactor is Zn(2+). Mg(2+) is required as a cofactor.

The catalysed reaction is ssDNA + n NTP = ssDNA/pppN(pN)n-1 hybrid + (n-1) diphosphate.. In terms of biological role, RNA polymerase that catalyzes the synthesis of short RNA molecules used as primers for DNA polymerase during DNA replication. This chain is DNA primase, found in Neisseria meningitidis serogroup B (strain ATCC BAA-335 / MC58).